The sequence spans 122 residues: Large ribosomal subunit protein uL14 (122 aa).

This sequence belongs to the universal ribosomal protein uL14 family. Part of the 50S ribosomal subunit. Forms a cluster with proteins L3 and L19. In the 70S ribosome, L14 and L19 interact and together make contacts with the 16S rRNA in bridges B5 and B8.

Functionally, binds to 23S rRNA. Forms part of two intersubunit bridges in the 70S ribosome. The chain is Large ribosomal subunit protein uL14 from Stutzerimonas stutzeri (strain A1501) (Pseudomonas stutzeri).